The sequence spans 446 residues: GRAM domain-containing protein 2B (446 aa).

Met1 is modified (N-acetylmethionine). The disordered stretch occupies residues 1-120 (MVKKRLPSND…RKKSSSSSQY (120 aa)). Residues 29 to 43 (SRSSTDSPSSVFFSS) are compositionally biased toward low complexity. Basic and acidic residues predominate over residues 95 to 113 (DKNDCKTESKNDPKTERKK). The GRAM domain occupies 124-191 (MHFHKLFLSV…FSVTLIKKTK (68 aa)). The segment covering 234 to 247 (TSVGNSPNPSSAEN) has biased composition (polar residues). The disordered stretch occupies residues 234–253 (TSVGNSPNPSSAENSFRADR). 3 positions are modified to phosphoserine: Ser239, Ser256, and Ser266. A disordered region spans residues 276–298 (RQDMEGYSSSGSQTPESENSRDF). Over residues 282 to 292 (YSSSGSQTPES) the composition is skewed to polar residues.

This Pongo abelii (Sumatran orangutan) protein is GRAM domain-containing protein 2B (GRAMD2B).